Consider the following 312-residue polypeptide: Ribosomal protein L11 methyltransferase (312 aa).

Residues Thr163, Gly184, Asp206, and Asn248 each contribute to the S-adenosyl-L-methionine site.

This sequence belongs to the methyltransferase superfamily. PrmA family.

Its subcellular location is the cytoplasm. It carries out the reaction L-lysyl-[protein] + 3 S-adenosyl-L-methionine = N(6),N(6),N(6)-trimethyl-L-lysyl-[protein] + 3 S-adenosyl-L-homocysteine + 3 H(+). Its function is as follows. Methylates ribosomal protein L11. In Clostridium kluyveri (strain NBRC 12016), this protein is Ribosomal protein L11 methyltransferase.